The sequence spans 188 residues: Elongation factor P (188 aa).

Belongs to the elongation factor P family.

The protein localises to the cytoplasm. The protein operates within protein biosynthesis; polypeptide chain elongation. Its function is as follows. Involved in peptide bond synthesis. Stimulates efficient translation and peptide-bond synthesis on native or reconstituted 70S ribosomes in vitro. Probably functions indirectly by altering the affinity of the ribosome for aminoacyl-tRNA, thus increasing their reactivity as acceptors for peptidyl transferase. This chain is Elongation factor P, found in Malacoplasma penetrans (strain HF-2) (Mycoplasma penetrans).